The chain runs to 488 residues: N-acyl-D-glutamate deacylase (488 aa).

The protein belongs to the metallo-dependent hydrolases superfamily. N-acyl-D-amino-acid deacylase family. Zn(2+) is required as a cofactor.

The protein localises to the cytoplasm. It catalyses the reaction an N-acyl-D-glutamate + H2O = D-glutamate + a carboxylate. Inhibited by cobalt, copper and EDTA. In Alcaligenes xylosoxydans xylosoxydans (Achromobacter xylosoxidans), this protein is N-acyl-D-glutamate deacylase.